The primary structure comprises 1287 residues: DNA-directed RNA polymerase 147 kDa polypeptide (1287 aa).

This sequence belongs to the poxviridae DNA-directed RNA polymerase 147 kDa subunit family. The DNA-dependent RNA polymerase used for intermediate and late genes expression consists of eight subunits Rpo30/OPG66, Rpo7/OPG90, Rpo22/OPG103, Rpo147/OPG105, Rpo18/OPG119, Rpo19/OPG131, Rpo132/OPG151 and Rpo35/OPG156. The same holoenzyme, with the addition of the transcription-specificity factor OPG109, is used for early gene expression.

It is found in the virion. It carries out the reaction RNA(n) + a ribonucleoside 5'-triphosphate = RNA(n+1) + diphosphate. Part of the DNA-dependent RNA polymerase which catalyzes the transcription of viral DNA into RNA using the four ribonucleoside triphosphates as substrates. Responsible for the transcription of early, intermediate and late genes. DNA-dependent RNA polymerase associates with the early transcription factor (ETF), itself composed of OPG118 and OPG133, thereby allowing the early genes transcription. Late transcription, and probably also intermediate transcription, require newly synthesized RNA polymerase. The polypeptide is DNA-directed RNA polymerase 147 kDa polypeptide (OPG105) (Bos taurus (Bovine)).